The sequence spans 751 residues: Photosystem I P700 chlorophyll a apoprotein A1 (751 aa).

The next 8 membrane-spanning stretches (helical) occupy residues 73-96 (VFSA…FHGA), 159-182 (LYST…WHYH), 198-222 (MNHH…HIAL), 294-312 (MAHH…GHQY), 349-372 (WHAQ…HHMY), 388-414 (LSLF…IFMV), 436-458 (AIIS…LYIH), and 533-551 (FMVH…LILL). Cys-575 and Cys-584 together coordinate [4Fe-4S] cluster. Transmembrane regions (helical) follow at residues 591–612 (HVFL…HFSW) and 665–687 (LSAY…MFLF). Chlorophyll a' is bound at residue His-676. Chlorophyll a-binding residues include Met-684 and Tyr-692. Trp-693 lines the phylloquinone pocket. A helical transmembrane segment spans residues 725–745 (AVGVAHYLLGGIATTWSFFLA).

This sequence belongs to the PsaA/PsaB family. The PsaA/B heterodimer binds the P700 chlorophyll special pair and subsequent electron acceptors. PSI consists of a core antenna complex that captures photons, and an electron transfer chain that converts photonic excitation into a charge separation. The eukaryotic PSI reaction center is composed of at least 11 subunits. It depends on P700 is a chlorophyll a/chlorophyll a' dimer, A0 is one or more chlorophyll a, A1 is one or both phylloquinones and FX is a shared 4Fe-4S iron-sulfur center. as a cofactor.

The protein resides in the plastid. It is found in the chloroplast thylakoid membrane. The catalysed reaction is reduced [plastocyanin] + hnu + oxidized [2Fe-2S]-[ferredoxin] = oxidized [plastocyanin] + reduced [2Fe-2S]-[ferredoxin]. Functionally, psaA and PsaB bind P700, the primary electron donor of photosystem I (PSI), as well as the electron acceptors A0, A1 and FX. PSI is a plastocyanin/cytochrome c6-ferredoxin oxidoreductase, converting photonic excitation into a charge separation, which transfers an electron from the donor P700 chlorophyll pair to the spectroscopically characterized acceptors A0, A1, FX, FA and FB in turn. Oxidized P700 is reduced on the lumenal side of the thylakoid membrane by plastocyanin or cytochrome c6. This is Photosystem I P700 chlorophyll a apoprotein A1 from Ostreococcus tauri.